Consider the following 69-residue polypeptide: Putative transmembrane protein ORF34 (69 aa).

2 helical membrane-spanning segments follow: residues 7-27 (LLSV…MMQF) and 42-62 (VSLM…IVYF).

The protein resides in the host membrane. In Haloarcula hispanica (His1V), this protein is Putative transmembrane protein ORF34.